Here is a 320-residue protein sequence, read N- to C-terminus: Cytochrome f (320 aa).

The N-terminal stretch at M1–A35 is a signal peptide. Positions 36, 56, 59, and 60 each coordinate heme. The helical transmembrane segment at I286–K306 threads the bilayer.

Belongs to the cytochrome f family. As to quaternary structure, the 4 large subunits of the cytochrome b6-f complex are cytochrome b6, subunit IV (17 kDa polypeptide, petD), cytochrome f and the Rieske protein, while the 4 small subunits are PetG, PetL, PetM and PetN. The complex functions as a dimer. It depends on heme as a cofactor.

The protein localises to the plastid. It is found in the chloroplast thylakoid membrane. Component of the cytochrome b6-f complex, which mediates electron transfer between photosystem II (PSII) and photosystem I (PSI), cyclic electron flow around PSI, and state transitions. This Amborella trichopoda protein is Cytochrome f.